The chain runs to 73 residues: Toxin Td3 (73 aa).

The first 7 residues, 1–7 (IGMVVEC), serve as a signal peptide directing secretion. Residues 8 to 70 (KDGYLMGPDG…VWERATNRCG (63 aa)) form the LCN-type CS-alpha/beta domain. 4 disulfide bridges follow: Cys-18–Cys-69, Cys-22–Cys-44, Cys-30–Cys-50, and Cys-34–Cys-52. Position 71 is a lysine amide (Lys-71).

Belongs to the long (4 C-C) scorpion toxin superfamily. Sodium channel inhibitor family. Beta subfamily. Expressed by the venom gland.

The protein localises to the secreted. Functionally, beta toxins bind voltage-independently at site-4 of sodium channels (Nav) and shift the voltage of activation toward more negative potentials thereby affecting sodium channel activation and promoting spontaneous and repetitive firing. This Tityus discrepans (Venezuelan scorpion) protein is Toxin Td3.